A 288-amino-acid polypeptide reads, in one-letter code: NGG1-interacting factor 3 (288 aa).

It belongs to the GTP cyclohydrolase I type 2/NIF3 family. May interact with NGG1.

Its subcellular location is the mitochondrion. The sequence is that of NGG1-interacting factor 3 from Saccharomyces cerevisiae (strain ATCC 204508 / S288c) (Baker's yeast).